Consider the following 1106-residue polypeptide: MKIYKKNHFLKILIIFIYLSCNILKVNADGTFSTIQPSTDIKFDKSNLEFVAEWDVSANSISNVVGSTDSSEFSLNYGVWGPTYNYLIAKNKSPSIKANVDYTFSFDFKLGKALGEYNNYQSMVLSFYIPEDIAYFPWEIRTPLYTTNEFSGNFASTSYQSKILTFRSTVDIGNSIMVLRINRATETGPTASSVYFRNMKITIPSKPITTPTDLLTKDSELIVIPKPPISLDLQDLTKCPYLTASDLYNWHDPTIWPNGVVPSPNQNITIPAGKRVLISASSISQTQIYSRIVVPVNSELIFNDQNFTMNIRDIYVQGKFIMGTSLCRYNSFINIIFHGEKTLQDTIAQFYGSKGIAVASGGFISVQGKQYHNTWSKLASNVWSGDRVIWIQDNVNWEVGQQVLITTSVYKDELDNQNEILTIKAIEGKKIEFTEPIKWFKYGSQEYQSEVALLSRRIVFSSDESSSVSTSFGGHILSSGEMQFAGVQLKRMGQKNVKARYPLHYHLGGTLNNSFISDCSVTNSYYRCYTIHGTNNVTLTRNVAYDAFGHCYYLEDGVEVDNRISFNLGAYVHTIGKPAAGASQIGETFYQSSELTQPADSAASCFYITNSWNSFIGNAASGGWAGFAFPNLPKPIGNHRTLNIIPMQYPIKEWQGNTAHSSGYYFEDGASIYVGGNLTFNEANGMLIYNSGRLGRTTYVNGVKNENNVVFDRLNNTKIFLSNLGVGYWGENIEIVGYESHDNTRPVSLFGNVWLHNALVNGQSGNILTKNSETTRQGFRFYDFYVQTIISNTIFRNFIHSTAATKRDEDNVVITATTFSDVFKPQFISATKNITFQNVPQSQIIGHEDVANSGSSRLFNFLDGDGSVTSSFTGKPGIPQIVGSHVSWWKFDDSCLFSTEWNVWVCNKGTKGLANIEFWVPGFMERELEQDPDSYIGSISLFGSGINDERKTLLTRNPGITGVSNMGWYAYFTIGTPNYLRIWTAQIAFGEYIFLAIPYPTGTTFTITSEYDYSNQYTYTITKTTSALAVKQGNGKQYYFDGTHLFLKLVNFMNTGGSWESFDRVGIKIPDVYWTYIYNIRATNTAKPSVNGYFLNLPDVRPSSTL.

The first 28 residues, 1–28 (MKIYKKNHFLKILIIFIYLSCNILKVNA), serve as a signal peptide directing secretion. Residues 254–380 (TIWPNGVVPS…YHNTWSKLAS (127 aa)) form the G8 domain. N-linked (GlcNAc...) asparagine glycans are attached at residues N267, N306, N512, N536, N677, N715, and N833.

It belongs to the comF family.

The protein resides in the secreted. This chain is Communication mutant protein F (comF-1), found in Dictyostelium discoideum (Social amoeba).